The following is a 199-amino-acid chain: Chaperone protein TorD (199 aa).

The protein belongs to the TorD/DmsD family. TorD subfamily.

The protein localises to the cytoplasm. Involved in the biogenesis of TorA. Acts on TorA before the insertion of the molybdenum cofactor and, as a result, probably favors a conformation of the apoenzyme that is competent for acquiring the cofactor. The polypeptide is Chaperone protein TorD (Escherichia coli O157:H7 (strain EC4115 / EHEC)).